Here is a 349-residue protein sequence, read N- to C-terminus: UPF0284 protein MM_0708 (349 aa).

Belongs to the UPF0284 family.

This chain is UPF0284 protein MM_0708, found in Methanosarcina mazei (strain ATCC BAA-159 / DSM 3647 / Goe1 / Go1 / JCM 11833 / OCM 88) (Methanosarcina frisia).